The chain runs to 349 residues: Ribosomal RNA small subunit methyltransferase C (349 aa).

The protein belongs to the methyltransferase superfamily. RsmC family. As to quaternary structure, monomer.

It is found in the cytoplasm. It carries out the reaction guanosine(1207) in 16S rRNA + S-adenosyl-L-methionine = N(2)-methylguanosine(1207) in 16S rRNA + S-adenosyl-L-homocysteine + H(+). In terms of biological role, specifically methylates the guanine in position 1207 of 16S rRNA in the 30S particle. This is Ribosomal RNA small subunit methyltransferase C from Psychromonas ingrahamii (strain DSM 17664 / CCUG 51855 / 37).